We begin with the raw amino-acid sequence, 209 residues long: Bilin biosynthesis protein RpcF (209 aa).

It belongs to the CpcE/RpcE/PecE family.

In terms of biological role, an enzyme involved in the biosynthesis of bilin. Might be involved in the specific attachment of phycoerythrobilin (PEB) to the R-phycocyanin II alpha chain. The chain is Bilin biosynthesis protein RpcF (rpcF) from Synechococcus sp. (strain WH8020).